We begin with the raw amino-acid sequence, 501 residues long: CaM kinase-like vesicle-associated protein (501 aa).

The Protein kinase domain maps to 24–286 (YDLGQVIKTE…AEEAISHEWI (263 aa)). A disordered region spans residues 327–501 (RAPEQSSTAA…AQESQREEAS (175 aa)). Residues 331 to 365 (QSSTAAAQSASATDTATPGAAGGATAAAASGATSA) show a composition bias toward low complexity. The span at 387–428 (TPATDGSATPATDGSVTPATDGSITPATDGSVTPATDRSATP) shows a compositional bias: polar residues. Position 435 is a phosphothreonine (threonine 435). The segment covering 438–451 (TEESTVPTTQSSAM) has biased composition (polar residues). Threonine 459 carries the phosphothreonine modification.

It belongs to the protein kinase superfamily. CAMK Ser/Thr protein kinase family. As to quaternary structure, interacts with calmodulin, in the presence of calcium. Ca(2+) is required as a cofactor.

It localises to the cell membrane. Its subcellular location is the cytoplasmic vesicle membrane. Functionally, does not appear to have detectable kinase activity. This Homo sapiens (Human) protein is CaM kinase-like vesicle-associated protein (CAMKV).